The following is a 214-amino-acid chain: Small ribosomal subunit protein uS3c (214 aa).

Positions 39–111 constitute a KH type-2 domain; sequence IRTYLNKLAK…QLTINIIEVE (73 aa).

This sequence belongs to the universal ribosomal protein uS3 family. As to quaternary structure, part of the 30S ribosomal subunit.

It is found in the plastid. It localises to the chloroplast. The chain is Small ribosomal subunit protein uS3c (rps3) from Trieres chinensis (Marine centric diatom).